The sequence spans 98 residues: Acylphosphatase (98 aa).

Positions 12–98 (TYYVRVRGVV…DKRFERFQQH (87 aa)) constitute an Acylphosphatase-like domain. Residues Arg27 and Asn45 contribute to the active site.

Belongs to the acylphosphatase family.

It carries out the reaction an acyl phosphate + H2O = a carboxylate + phosphate + H(+). The sequence is that of Acylphosphatase (acyP) from Burkholderia thailandensis (strain ATCC 700388 / DSM 13276 / CCUG 48851 / CIP 106301 / E264).